The primary structure comprises 426 residues: 5-methylthioadenosine/S-adenosylhomocysteine deaminase (426 aa).

Zn(2+) is bound by residues H60 and H62. The substrate site is built by E89 and H179. Position 206 (H206) interacts with Zn(2+). Positions 209 and 294 each coordinate substrate. D294 is a binding site for Zn(2+).

This sequence belongs to the metallo-dependent hydrolases superfamily. MTA/SAH deaminase family. It depends on Zn(2+) as a cofactor.

The enzyme catalyses S-adenosyl-L-homocysteine + H2O + H(+) = S-inosyl-L-homocysteine + NH4(+). The catalysed reaction is S-methyl-5'-thioadenosine + H2O + H(+) = S-methyl-5'-thioinosine + NH4(+). Catalyzes the deamination of 5-methylthioadenosine and S-adenosyl-L-homocysteine into 5-methylthioinosine and S-inosyl-L-homocysteine, respectively. Is also able to deaminate adenosine. The sequence is that of 5-methylthioadenosine/S-adenosylhomocysteine deaminase from Dictyoglomus turgidum (strain DSM 6724 / Z-1310).